The sequence spans 36 residues: Potassium channel toxin alpha-KTx 6.14 (36 aa).

4 disulfide bridges follow: C5–C25, C11–C30, C15–C32, and C20–C35.

Expressed by the venom gland.

Its subcellular location is the secreted. Functionally, blocks Shaker B channels expressed in Sf9 cells, with a dissociation constant of 52 nM. The polypeptide is Potassium channel toxin alpha-KTx 6.14 (Hoffmannihadrurus gertschi (Scorpion)).